Consider the following 168-residue polypeptide: MMIDVFLIALLLSILTGNIKNVLKYNYKGLYLFAIPFVLQLLPWKEILVPLSFVMLFLFFIWNRNIPGFKLMAIGAVLNGFTMSVNGGKMPVWEPTLKLLNLDLDFKHTAFTEFSWKTLLADYIPVYLPWGRKFVISVGDILVFIGVFIFFVLKPRFQTQPSRVPHES.

2 helical membrane-spanning segments follow: residues 41-61 and 133-153; these read LLPW…LFFI and KFVI…FFVL.

It localises to the cell membrane. This is an uncharacterized protein from Thermotoga maritima (strain ATCC 43589 / DSM 3109 / JCM 10099 / NBRC 100826 / MSB8).